The chain runs to 818 residues: Serine/threonine-protein phosphatase 4 regulatory subunit 3 (818 aa).

The region spanning 1–100 (MTDTRRRVKV…DEIWEKICQV (100 aa)) is the WH1 domain. The disordered stretch occupies residues 718 to 818 (LAKSSFSGRQ…PPSKKSRLSS (101 aa)). The span at 721 to 730 (SSFSGRQNPS) shows a compositional bias: polar residues. A compositionally biased stretch (low complexity) spans 736-756 (SGSTKTSLSSPPPSASLSPGS). Positions 788 to 804 (YPDDDEEEEDDDDEESK) are enriched in acidic residues.

Belongs to the SMEK family. In terms of assembly, serine/threonine-protein phosphatase 4 (PP4) occurs in different assemblies of the catalytic and one or more regulatory subunits.

Regulatory subunit of serine/threonine-protein phosphatase 4. The protein is Serine/threonine-protein phosphatase 4 regulatory subunit 3 (smek1) of Tetraodon nigroviridis (Spotted green pufferfish).